Consider the following 151-residue polypeptide: UPF0208 membrane protein NT01EI_2692 (151 aa).

The next 2 membrane-spanning stretches (helical) occupy residues 46–65 (FAIR…QIAL) and 69–91 (LGPA…WWLG).

This sequence belongs to the UPF0208 family.

The protein resides in the cell inner membrane. The sequence is that of UPF0208 membrane protein NT01EI_2692 from Edwardsiella ictaluri (strain 93-146).